Reading from the N-terminus, the 1522-residue chain is DNA topoisomerase 2-binding protein 1 (1522 aa).

BRCT domains lie at valine 101–aspartate 189 and phenylalanine 195–threonine 284. Residue threonine 298 is modified to Phosphothreonine. A Phosphoserine modification is found at serine 301. 3 BRCT domains span residues alanine 354–histidine 444, threonine 548–leucine 633, and threonine 641–isoleucine 738. The interval isoleucine 756–leucine 891 is interaction with CIP2A. Threonine 779 and threonine 848 each carry phosphothreonine. The Nuclear localization signal motif lies at proline 852 to lysine 858. At serine 860 the chain carries Phosphoserine. The residue at position 861 (threonine 861) is a Phosphothreonine. A phosphoserine mark is found at serine 864, serine 886, and serine 888. The BRCT 6 domain occupies glutamate 900–histidine 991. At serine 1002 the chain carries Phosphoserine. The interval valine 1018–lysine 1058 is disordered. The span at aspartate 1024–valine 1036 shows a compositional bias: acidic residues. The segment covering methionine 1039–lysine 1058 has biased composition (polar residues). Phosphothreonine is present on residues threonine 1062 and threonine 1064. Polar residues predominate over residues serine 1083–serine 1114. Residues serine 1083–arginine 1118 are disordered. BRCT domains lie at glutamate 1259–tryptophan 1351 and isoleucine 1389–leucine 1486. Positions threonine 1501–histidine 1522 are disordered. Phosphoserine is present on serine 1504. A Nuclear localization signal motif is present at residues lysine 1517–arginine 1520.

The protein belongs to the TOPBP1 family. In terms of assembly, interacts (via BRCT domains 1 and 2) with (phosphorylated) MDC1; promoting TOPBP1 recruitment to DNA damage sites during mitosis. Interacts (via BRCT domains 7 and 8) with (autophosphorylated) ATR; promoting activation of ATR. Interacts (via BRCT domains 7 and 8) with (phosphorylated) POLQ; specifically binds POLQ phosphorylated by PLK1, promoting POLQ recruitment to DNA damage sites. Interacts (via BRCT domains 1 and 2) with (phosphorylated) RAD9A. Interacts (via BRCT domain 2) with (phosphorylated) TP53BP1. Interacts (via BRCT domain 2) with (phosphorylated) HTATSF1. Interacts (via BRCT domains 7 and 8) with (phosphorylated) RAD51; promoting RAD51 recruitment to damaged chromatin. Interacts with CIP2A; forming the CIP2A-TOPBP1 complex. Interacts with POLE. Interacts with UBR5. Interacts with E2F1. Interacts with PML. Interacts with SMARCA2. Interacts with SMARCA4. Interacts with RHNO1. May interact with TOP2B. Interacts with TICRR. Interacts with HELB. Interacts (via residues 1233-1522) with RECQL4. In terms of processing, phosphorylated on serine and threonine residues in response to X-ray irradiation. Ubiquitinated and degraded by the proteasome. X-ray irradiation reduces ubiquitination. Deubiquitinated by USP13; leading to TOPBP1 stabilizion and activation of the ATR-TOPBP1 axis pathway. In terms of tissue distribution, highly expressed in heart, brain, placenta, lung and kidney.

It localises to the nucleus. The protein resides in the chromosome. The protein localises to the cytoplasm. It is found in the cytoskeleton. Its subcellular location is the microtubule organizing center. It localises to the centrosome. The protein resides in the spindle pole. Functionally, scaffold protein that acts as a key protein-protein adapter in DNA replication and DNA repair. Composed of multiple BRCT domains, which specifically recognize and bind phosphorylated proteins, bringing proteins together into functional combinations. Required for DNA replication initiation but not for the formation of pre-replicative complexes or the elongation stages. Necessary for the loading of replication factors onto chromatin, including GMNC, CDC45, DNA polymerases and components of the GINS complex. Plays a central role in DNA repair by bridging proteins and promoting recruitment of proteins to DNA damage sites. Involved in double-strand break (DSB) repair via homologous recombination in S-phase by promoting the exchange between the DNA replication factor A (RPA) complex and RAD51. Mechanistically, TOPBP1 is recruited to DNA damage sites in S-phase via interaction with phosphorylated HTATSF1, and promotes the loading of RAD51, thereby facilitating RAD51 nucleofilaments formation and RPA displacement, followed by homologous recombination. Involved in microhomology-mediated end-joining (MMEJ) DNA repair by promoting recruitment of polymerase theta (POLQ) to DNA damage sites during mitosis. MMEJ is an alternative non-homologous end-joining (NHEJ) machinery that takes place during mitosis to repair DSBs in DNA that originate in S-phase. Recognizes and binds POLQ phosphorylated by PLK1, enabling its recruitment to DSBs for subsequent repair. Involved in G1 DNA damage checkpoint by acting as a molecular adapter that couples TP53BP1 and the 9-1-1 complex. In response to DNA damage, triggers the recruitment of checkpoint signaling proteins on chromatin, which activate the CHEK1 signaling pathway and block S-phase progression. Acts as an activator of the kinase activity of ATR. Also required for chromosomal stability when DSBs occur during mitosis by forming filamentous assemblies that bridge MDC1 and tether broken chromosomes during mitosis. Together with CIP2A, plays an essential role in the response to genome instability generated by the presence of acentric chromosome fragments derived from shattered chromosomes within micronuclei. Micronuclei, which are frequently found in cancer cells, consist of chromatin surrounded by their own nuclear membrane: following breakdown of the micronuclear envelope, a process associated with chromothripsis, the CIP2A-TOPBP1 complex tethers chromosome fragments during mitosis to ensure clustered segregation of the fragments to a single daughter cell nucleus, facilitating re-ligation with limited chromosome scattering and loss. Recruits the SWI/SNF chromatin remodeling complex to E2F1-responsive promoters, thereby down-regulating E2F1 activity and inhibiting E2F1-dependent apoptosis during G1/S transition and after DNA damage. In Homo sapiens (Human), this protein is DNA topoisomerase 2-binding protein 1.